Consider the following 474-residue polypeptide: tRNA-2-methylthio-N(6)-dimethylallyladenosine synthase (474 aa).

Residues 3 to 120 (KKLHIKTWGC…LPEMIEQIQR (118 aa)) enclose the MTTase N-terminal domain. Residues cysteine 12, cysteine 49, cysteine 83, cysteine 157, cysteine 161, and cysteine 164 each coordinate [4Fe-4S] cluster. The Radical SAM core domain occupies 143-375 (RADGPTAFVS…QDRITQQAMR (233 aa)). Residues 378 to 441 (RQMLGTVQRI…TNSLRGEFVR (64 aa)) enclose the TRAM domain.

The protein belongs to the methylthiotransferase family. MiaB subfamily. In terms of assembly, monomer. Requires [4Fe-4S] cluster as cofactor.

The protein resides in the cytoplasm. The enzyme catalyses N(6)-dimethylallyladenosine(37) in tRNA + (sulfur carrier)-SH + AH2 + 2 S-adenosyl-L-methionine = 2-methylsulfanyl-N(6)-dimethylallyladenosine(37) in tRNA + (sulfur carrier)-H + 5'-deoxyadenosine + L-methionine + A + S-adenosyl-L-homocysteine + 2 H(+). Functionally, catalyzes the methylthiolation of N6-(dimethylallyl)adenosine (i(6)A), leading to the formation of 2-methylthio-N6-(dimethylallyl)adenosine (ms(2)i(6)A) at position 37 in tRNAs that read codons beginning with uridine. This is tRNA-2-methylthio-N(6)-dimethylallyladenosine synthase from Shewanella frigidimarina (strain NCIMB 400).